We begin with the raw amino-acid sequence, 938 residues long: Auxilin (938 aa).

The segment at 19 to 41 (AAAGENRMKDSENKGASSPDMEP) is disordered. A run of 3 repeats spans residues 61 to 64 (NLKD), 65 to 68 (NLKD), and 69 to 72 (TLKD). The 3 X 4 AA approximate tandem repeats stretch occupies residues 61 to 72 (NLKDNLKDTLKD). The 168-residue stretch at 80–247 (SVSSYTKGDL…GYMCDLLADK (168 aa)) folds into the Phosphatase tensin-type domain. Serine 137 is modified (phosphoserine). Cysteine 189 functions as the Phosphocysteine intermediate in the catalytic mechanism. Positions 253–391 (FKPLTIKAIT…FQVTLDIEVQ (139 aa)) constitute a C2 tensin-type domain. The short motif at 434-442 (PADLPPDHP) is the SH3-binding element. Residues 467–801 (EEDHAALVNQ…GKGSTNLEGK (335 aa)) form a disordered region. Serine 478 and serine 481 each carry phosphoserine. A compositionally biased stretch (polar residues) spans 531–548 (DVSTNFSSLAAPPSNSEL). Positions 559-569 (TGPAQAGQAGV) are enriched in low complexity. Polar residues-rich tracts occupy residues 579–596 (VSAQ…SASP) and 624–654 (FLNT…TPAV). The residue at position 595 (serine 595) is a Phosphoserine. Low complexity predominate over residues 679–694 (SAATSPTGSSHGTPTH). Residues 754-781 (NWQQTQSKPQSSMPHSSPQNRPNYNVSF) show a composition bias toward polar residues. Residues 874–938 (TKWKPVGMAD…FENQGQKPLY (65 aa)) enclose the J domain.

Forms a complex composed of HSPA8, CLTC and DNAJC6. Interacts with HSPA8/HSC70 in an ATP-dependent manner; this interaction stimulates the HSPA8's ATPase activity. Interacts with CLTC; this interaction produces a local change in heavy-chain contacts, creating a detectable global distortion of the clathrin coat. Interacts with AP2A2. Interacts with DNM1(GTP-bound form); this interaction allows clathrin-coated vesicle (CCV) formation at the plasma membrane. The N-terminus is blocked. Post-translationally, phosphorylation at Ser-595 modulates its ability to bind CLTC and therefore the synaptic vesicle endocytosis (SVE).

Its subcellular location is the cytoplasmic vesicle. It localises to the clathrin-coated vesicle. Functionally, may act as a protein phosphatase and/or a lipid phosphatase. Co-chaperone that recruits HSPA8/HSC70 to clathrin-coated vesicles (CCVs) and promotes the ATP-dependent dissociation of clathrin from CCVs and participates in clathrin-mediated endocytosis of synaptic vesicles and their recycling and also in intracellular trafficking. Firstly, binds tightly to the clathrin cages, at a ratio of one DNAJC6 per clathrin triskelion. The HSPA8:ATP complex then binds to the clathrin-auxilin cage, initially at a ratio of one HSPA8 per triskelion leading to ATP hydrolysis stimulation and causing a conformational change in the HSPA8. This cycle is repeated three times to drive to a complex containing the clathrin-auxilin cage associated to three HSPA8:ADP complex. The ATP hydrolysis of the third HSPA8:ATP complex leads to a concerted dismantling of the cage into component triskelia. Then, dissociates from the released triskelia and be recycled to initiate another cycle of HSPA8's recruitment. Also acts during the early steps of clathrin-coated vesicle (CCV) formation through its interaction with the GTP bound form of DNM1. The chain is Auxilin from Mus musculus (Mouse).